A 136-amino-acid polypeptide reads, in one-letter code: uncharacterized protein (136 aa).

Its subcellular location is the cytoplasm. It is found in the nucleus. This is an uncharacterized protein from Schizosaccharomyces pombe (strain 972 / ATCC 24843) (Fission yeast).